A 952-amino-acid polypeptide reads, in one-letter code: Probable RNA-binding protein 19 (952 aa).

Positions 2–79 (SRLIVKNLPN…TRITVEFCKS (78 aa)) constitute an RRM 1 domain. 3 disordered regions span residues 85-126 (KPRA…LEKL), 159-267 (KAKT…RGAV), and 367-395 (KQAP…EEED). A compositionally biased stretch (low complexity) spans 95–109 (KSSQPKQPSQDSVPS). A compositionally biased stretch (polar residues) spans 163–180 (KASSDYLNFDSDSNSDSG). Ser-177, Ser-179, and Ser-183 each carry phosphoserine. Acidic residues-rich tracts occupy residues 181–196 (QESE…EEEQ) and 224–251 (SSED…EEEG). RRM domains are found at residues 293–368 (YTVK…REKQ) and 400–478 (GRLF…PSTI). Lys-479 participates in a covalent cross-link: Glycyl lysine isopeptide (Lys-Gly) (interchain with G-Cter in SUMO2). The disordered stretch occupies residues 481-504 (EASQEANAPGSSYKKKKEAMDKAN). The 73-residue stretch at 584–656 (TVILAKNLPA…VPLYLEWAPI (73 aa)) folds into the RRM 4 domain. Positions 664-679 (QKKDSQHEQPAEKAEV) are enriched in basic and acidic residues. Positions 664–719 (QKKDSQHEQPAEKAEVEQETVLDPEGEKASVEGAEASTGKMEEEEEEEEEEEEESI) are disordered. The residue at position 693 (Ser-693) is a Phosphoserine. Positions 705–718 (EEEEEEEEEEEEES) are enriched in acidic residues. RRM domains follow at residues 722 to 803 (CTLF…ISER) and 824 to 904 (SKIL…WADS). Phosphoserine is present on residues Ser-928 and Ser-944.

The protein belongs to the RRM MRD1 family. Expressed in the crypts of Lieberkuhn of the intestine (at protein level).

The protein resides in the nucleus. Its subcellular location is the nucleolus. It localises to the nucleoplasm. It is found in the cytoplasm. The protein localises to the chromosome. In terms of biological role, plays a role in embryo pre-implantation development. This chain is Probable RNA-binding protein 19 (Rbm19), found in Mus musculus (Mouse).